The sequence spans 433 residues: Trigger factor (433 aa).

Residues 161–246 (EDRVVIDFVG…LKKVENIVLP (86 aa)) enclose the PPIase FKBP-type domain.

Belongs to the FKBP-type PPIase family. Tig subfamily.

The protein resides in the cytoplasm. The catalysed reaction is [protein]-peptidylproline (omega=180) = [protein]-peptidylproline (omega=0). In terms of biological role, involved in protein export. Acts as a chaperone by maintaining the newly synthesized protein in an open conformation. Functions as a peptidyl-prolyl cis-trans isomerase. The chain is Trigger factor from Actinobacillus pleuropneumoniae serotype 5b (strain L20).